The following is a 217-amino-acid chain: 3-demethoxyubiquinol 3-hydroxylase (217 aa).

Fe cation contacts are provided by Glu66, Glu96, His99, Glu148, Glu180, and His183.

The protein belongs to the COQ7 family. Fe cation serves as cofactor.

The protein localises to the cell membrane. It catalyses the reaction a 5-methoxy-2-methyl-3-(all-trans-polyprenyl)benzene-1,4-diol + AH2 + O2 = a 3-demethylubiquinol + A + H2O. Its pathway is cofactor biosynthesis; ubiquinone biosynthesis. Functionally, catalyzes the hydroxylation of 2-nonaprenyl-3-methyl-6-methoxy-1,4-benzoquinol during ubiquinone biosynthesis. The polypeptide is 3-demethoxyubiquinol 3-hydroxylase (Xanthomonas axonopodis pv. citri (strain 306)).